Here is a 634-residue protein sequence, read N- to C-terminus: Chaperone protein HtpG (634 aa).

Residues 1–342 (MSVETQKETL…SNDLSLNVSR (342 aa)) form an a; substrate-binding region. Residues 343 to 559 (EILQKDPVID…EQDLGLQMRQ (217 aa)) form a b region. The interval 560-634 (ILEASGQKVP…LNKLLVELSA (75 aa)) is c.

This sequence belongs to the heat shock protein 90 family. In terms of assembly, homodimer.

It is found in the cytoplasm. Molecular chaperone. Has ATPase activity. The polypeptide is Chaperone protein HtpG (Ectopseudomonas mendocina (strain ymp) (Pseudomonas mendocina)).